Consider the following 605-residue polypeptide: Adenine deaminase (605 aa).

This sequence belongs to the metallo-dependent hydrolases superfamily. Adenine deaminase family. It depends on Mn(2+) as a cofactor.

The enzyme catalyses adenine + H2O + H(+) = hypoxanthine + NH4(+). This chain is Adenine deaminase, found in Staphylothermus marinus (strain ATCC 43588 / DSM 3639 / JCM 9404 / F1).